The chain runs to 636 residues: Nitrous-oxide reductase (636 aa).

The segment at residues 1 to 49 (MSDDTKSPHEETHGLNRRGFLGASALTGAAALVGASALGSAVVGREARA) is a signal peptide (tat-type signal). 3 residues coordinate Cu cation: histidine 127, histidine 128, and histidine 176. 4 residues coordinate Ca(2+): tyrosine 254, glutamate 257, methionine 265, and aspartate 271. A compositionally biased stretch (basic and acidic residues) spans 302–312 (DGRRKDGKDSP). Residues 302-322 (DGRRKDGKDSPVTRYIPVPKN) form a disordered region. A Ca(2+)-binding site is contributed by asparagine 322. Cu cation contacts are provided by histidine 324, histidine 380, and histidine 431. The Ca(2+) site is built by lysine 452 and glutamate 467. The Cu cation site is built by histidine 492, histidine 581, cysteine 616, tryptophan 618, cysteine 620, histidine 624, and methionine 627. Residues 540–636 (NKVRVYMVSM…MCGRMLVEKA (97 aa)) form a COX2-like region.

It belongs to the NosZ family. This sequence in the C-terminal section; belongs to the cytochrome c oxidase subunit 2 family. Homodimer. Ca(2+) is required as a cofactor. The cofactor is Cu cation. Predicted to be exported by the Tat system. The position of the signal peptide cleavage has not been experimentally proven.

It localises to the periplasm. It catalyses the reaction N2 + 2 Fe(III)-[cytochrome c] + H2O = nitrous oxide + 2 Fe(II)-[cytochrome c] + 2 H(+). Its pathway is nitrogen metabolism; nitrate reduction (denitrification); dinitrogen from nitrate: step 4/4. Functionally, nitrous-oxide reductase is part of a bacterial respiratory system which is activated under anaerobic conditions in the presence of nitrate or nitrous oxide. This is Nitrous-oxide reductase (nosZ) from Pseudomonas aeruginosa (strain ATCC 15692 / DSM 22644 / CIP 104116 / JCM 14847 / LMG 12228 / 1C / PRS 101 / PAO1).